The following is a 222-amino-acid chain: Cytidylate kinase 2 (222 aa).

Glycine 7–threonine 15 lines the ATP pocket.

Belongs to the cytidylate kinase family. Type 1 subfamily.

It is found in the cytoplasm. The catalysed reaction is CMP + ATP = CDP + ADP. The enzyme catalyses dCMP + ATP = dCDP + ADP. The polypeptide is Cytidylate kinase 2 (Haemophilus influenzae (strain ATCC 51907 / DSM 11121 / KW20 / Rd)).